The following is a 218-amino-acid chain: Elongation factor Ts (218 aa).

An involved in Mg(2+) ion dislocation from EF-Tu region spans residues 82–85; that stretch reads TDFV.

This sequence belongs to the EF-Ts family.

The protein localises to the cytoplasm. Its function is as follows. Associates with the EF-Tu.GDP complex and induces the exchange of GDP to GTP. It remains bound to the aminoacyl-tRNA.EF-Tu.GTP complex up to the GTP hydrolysis stage on the ribosome. This is Elongation factor Ts from Prochlorococcus marinus (strain MIT 9301).